A 234-amino-acid chain; its full sequence is Peroxisomal coenzyme A diphosphatase ndx-8 (234 aa).

One can recognise a Nudix hydrolase domain in the interval 27–162 (EQDAGVLILL…TFLIDEFYMV (136 aa)). Positions 66–90 (GGMMDDEDGQNVRRTAIREAYEEVG) match the Nudix box motif. Positions 84 and 88 each coordinate Mg(2+). A helical transmembrane segment spans residues 170 to 190 (YPTTYGVTALMCIVVAIGLLG). Positions 232–234 (SKI) match the Microbody targeting signal motif.

Belongs to the Nudix hydrolase family. It depends on Mg(2+) as a cofactor. Requires Mn(2+) as cofactor.

The protein resides in the peroxisome membrane. Coenzyme A diphosphatase which mediates the cleavage of CoA into 3',5'-ADP and 4'-phosphopantetheine. The polypeptide is Peroxisomal coenzyme A diphosphatase ndx-8 (ndx-8) (Caenorhabditis elegans).